A 263-amino-acid chain; its full sequence is Endonuclease 8 (263 aa).

The active-site Schiff-base intermediate with DNA is the proline 2. Glutamate 3 serves as the catalytic Proton donor. Lysine 53 functions as the Proton donor; for beta-elimination activity in the catalytic mechanism. DNA-binding residues include glutamine 70, arginine 125, and asparagine 169. Residues 229-263 form an FPG-type zinc finger; it reads KVFHRDGEACERCGGIIEKTTLSSRPFYWCPHCQK. Arginine 253 acts as the Proton donor; for delta-elimination activity in catalysis.

It belongs to the FPG family. Zn(2+) is required as a cofactor.

The enzyme catalyses 2'-deoxyribonucleotide-(2'-deoxyribose 5'-phosphate)-2'-deoxyribonucleotide-DNA = a 3'-end 2'-deoxyribonucleotide-(2,3-dehydro-2,3-deoxyribose 5'-phosphate)-DNA + a 5'-end 5'-phospho-2'-deoxyribonucleoside-DNA + H(+). Involved in base excision repair of DNA damaged by oxidation or by mutagenic agents. Acts as a DNA glycosylase that recognizes and removes damaged bases. Has a preference for oxidized pyrimidines, such as thymine glycol, 5,6-dihydrouracil and 5,6-dihydrothymine. Has AP (apurinic/apyrimidinic) lyase activity and introduces nicks in the DNA strand. Cleaves the DNA backbone by beta-delta elimination to generate a single-strand break at the site of the removed base with both 3'- and 5'-phosphates. In Salmonella arizonae (strain ATCC BAA-731 / CDC346-86 / RSK2980), this protein is Endonuclease 8.